Here is a 220-residue protein sequence, read N- to C-terminus: Nucleoside diphosphate kinase, mitochondrial (220 aa).

A mitochondrion-targeting transit peptide spans 1–57 (MFSRFARAFPKILASGASQRTFATVQKAFANPTSKKLIVGSSLLIGSAFATTSFVAC). The ATP site is built by K80, F128, R156, T162, R173, and N183. H186 functions as the Pros-phosphohistidine intermediate in the catalytic mechanism.

This sequence belongs to the NDK family. It depends on Mg(2+) as a cofactor.

It is found in the mitochondrion intermembrane space. The catalysed reaction is a 2'-deoxyribonucleoside 5'-diphosphate + ATP = a 2'-deoxyribonucleoside 5'-triphosphate + ADP. It catalyses the reaction a ribonucleoside 5'-diphosphate + ATP = a ribonucleoside 5'-triphosphate + ADP. In terms of biological role, major role in the synthesis of nucleoside triphosphates other than ATP. The ATP gamma phosphate is transferred to the NDP beta phosphate via a ping-pong mechanism, using a phosphorylated active-site intermediate. This chain is Nucleoside diphosphate kinase, mitochondrial (ndkM), found in Dictyostelium discoideum (Social amoeba).